The following is a 439-amino-acid chain: Chaperone SurA (439 aa).

An N-terminal signal peptide occupies residues 1-27 (MRRISSRLSLVLFAALSCATALFPAHA). 2 PpiC domains span residues 180–281 (GEEF…KLLD) and 293–391 (LEQT…QVEA).

The protein resides in the periplasm. It catalyses the reaction [protein]-peptidylproline (omega=180) = [protein]-peptidylproline (omega=0). Its function is as follows. Chaperone involved in the correct folding and assembly of outer membrane proteins. Recognizes specific patterns of aromatic residues and the orientation of their side chains, which are found more frequently in integral outer membrane proteins. May act in both early periplasmic and late outer membrane-associated steps of protein maturation. This chain is Chaperone SurA, found in Aromatoleum aromaticum (strain DSM 19018 / LMG 30748 / EbN1) (Azoarcus sp. (strain EbN1)).